The following is a 92-amino-acid chain: MVRSVWKGPFVDGYLLGKAEKVRASGRNEVIKIWSRRSTILPQFVGLTFGVHNGNKHIPVFVSEEMVGHKFGEFAPTRTYYGHGADKKAKRK.

Belongs to the universal ribosomal protein uS19 family.

Its function is as follows. Protein S19 forms a complex with S13 that binds strongly to the 16S ribosomal RNA. This chain is Small ribosomal subunit protein uS19, found in Bartonella bacilliformis (strain ATCC 35685 / KC583 / Herrer 020/F12,63).